Consider the following 209-residue polypeptide: Interleukin-6 (209 aa).

A signal peptide spans 1–26 (RFTSAFSPVAFSLGLLLVMATAFPTP). Residues 28-47 (PVGGESQADATSNRPPLTSP) are disordered. C69 and C75 are joined by a disulfide. A Phosphoserine modification is found at S78. C98 and C108 are oxidised to a cystine.

Belongs to the IL-6 superfamily. In terms of assembly, component of a hexamer of two molecules each of IL6, IL6R and IL6ST; first binds to IL6R to associate with the signaling subunit IL6ST. Interacts with IL6R (via the N-terminal ectodomain); this interaction may be affected by IL6R-binding with SORL1, hence decreasing IL6 cis signaling. Interacts with SORL1 (via the N-terminal ectodomain); this interaction leads to IL6 internalization and lysosomal degradation. May form a trimeric complex with the soluble SORL1 ectodomain and soluble IL6R receptor; this interaction might stabilize circulating IL6, hence promoting IL6 trans signaling.

Its subcellular location is the secreted. Cytokine with a wide variety of biological functions in immunity, tissue regeneration, and metabolism. Binds to IL6R, then the complex associates to the signaling subunit IL6ST/gp130 to trigger the intracellular IL6-signaling pathway. The interaction with the membrane-bound IL6R and IL6ST stimulates 'classic signaling', whereas the binding of IL6 and soluble IL6R to IL6ST stimulates 'trans-signaling'. Alternatively, 'cluster signaling' occurs when membrane-bound IL6:IL6R complexes on transmitter cells activate IL6ST receptors on neighboring receiver cells. In terms of biological role, IL6 is a potent inducer of the acute phase response. Rapid production of IL6 contributes to host defense during infection and tissue injury, but excessive IL6 synthesis is involved in disease pathology. In the innate immune response, is synthesized by myeloid cells, such as macrophages and dendritic cells, upon recognition of pathogens through toll-like receptors (TLRs) at the site of infection or tissue injury. In the adaptive immune response, is required for the differentiation of B cells into immunoglobulin-secreting cells. Plays a major role in the differentiation of CD4(+) T cell subsets. Essential factor for the development of T follicular helper (Tfh) cells that are required for the induction of germinal-center formation. Required to drive naive CD4(+) T cells to the Th17 lineage. Also required for proliferation of myeloma cells and the survival of plasmablast cells. Its function is as follows. Acts as an essential factor in bone homeostasis and on vessels directly or indirectly by induction of VEGF, resulting in increased angiogenesis activity and vascular permeability. Induces, through 'trans-signaling' and synergistically with IL1B and TNF, the production of VEGF. Involved in metabolic controls, is discharged into the bloodstream after muscle contraction increasing lipolysis and improving insulin resistance. 'Trans-signaling' in central nervous system also regulates energy and glucose homeostasis. Mediates, through GLP-1, crosstalk between insulin-sensitive tissues, intestinal L cells and pancreatic islets to adapt to changes in insulin demand. Also acts as a myokine. Plays a protective role during liver injury, being required for maintenance of tissue regeneration. Also has a pivotal role in iron metabolism by regulating HAMP/hepcidin expression upon inflammation or bacterial infection. Through activation of IL6ST-YAP-NOTCH pathway, induces inflammation-induced epithelial regeneration. In Phoca vitulina (Harbor seal), this protein is Interleukin-6 (IL6).